The sequence spans 379 residues: MSTFFTNLRRVNKVYPNQATFLTDNTRLLTTTPAGFTNVLRAPSTRNLGNGRFEPGYNLSNNQFVSAGDINRITRGNDVPRIRNVFQGISDPQIGSLNQLRRADNVPDAGLHVKRTRSDAVKQNFPETNVRSADGVDRALQQNPRLNTYLQGAKTAGVGVLLAGGAYLTFSAATLVQDIIQALNNTGGSYYVRGADGGDTADACLLLSRTCQRDPNMNTSDVVICNHDPLIADTAQLQAICSGFNYQQEQTVCRQSDPAADPDSPQFVDVSDLLPGQTIMCIEPYNLGDLIGDLGLDHLLGEDGLVGKSSNSSDSVSNKLMPLIWLIGAVLFLGLIIYLIYRFVIKGGAGAAGAARAPPVIVLPPPPTQQTYNSTKQQI.

Residues 156–176 traverse the membrane as a helical segment; that stretch reads AGVGVLLAGGAYLTFSAATLV. N-linked (GlcNAc...) asparagine; by host glycosylation occurs at N184. Residues 320 to 340 traverse the membrane as a helical segment; it reads LMPLIWLIGAVLFLGLIIYLI.

This sequence belongs to the baculoviridae E56 family.

The protein resides in the virion membrane. In terms of biological role, structural protein that is specific for occlusion-derived virus (ODV) envelopes but not of budded virus (BV). The sequence is that of Occlusion-derived virus envelope protein E56 (ODVP6E) from Choristoneura fumiferana nuclear polyhedrosis virus (CfMNPV).